The chain runs to 142 residues: Large ribosomal subunit protein uL13 (142 aa).

Belongs to the universal ribosomal protein uL13 family. In terms of assembly, part of the 50S ribosomal subunit.

Functionally, this protein is one of the early assembly proteins of the 50S ribosomal subunit, although it is not seen to bind rRNA by itself. It is important during the early stages of 50S assembly. The protein is Large ribosomal subunit protein uL13 of Histophilus somni (Haemophilus somnus).